The chain runs to 332 residues: Cytoskeleton protein RodZ (332 aa).

Over 1-111 the chain is Cytoplasmic; sequence MNTETTQDTT…LKKSRKKRDG (111 aa). An HTH cro/C1-type domain is found at 19–71; it reads LREARERLGLTQQTIAERLCLKITTVRDIEDGTTPADLAPTFLRGYIRSYAKL. Residues 30–49 constitute a DNA-binding region (H-T-H motif); the sequence is QQTIAERLCLKITTVRDIED. The helical; Signal-anchor for type II membrane protein transmembrane segment at 112 to 132 threads the bilayer; sequence WLMIITWLVVLVVLGLTGAWW. Residues 133–332 are Periplasmic-facing; sequence WQNHQAQQAE…QVARLTLTAE (200 aa). The interval 149-225 is disordered; the sequence is HASSMQSQTE…PSQANATQSQ (77 aa). Composition is skewed to polar residues over residues 151-160 and 168-182; these read SSMQSQTEGQ and SAPQ…AATP. The segment covering 190-225 has biased composition (low complexity); that stretch reads SATIAATPSTPPSSTTASSAAPSSQSPSQANATQSQ.

Belongs to the RodZ family.

The protein resides in the cell inner membrane. In terms of biological role, cytoskeletal protein that is involved in cell-shape control through regulation of the length of the long axis. This chain is Cytoskeleton protein RodZ, found in Pectobacterium atrosepticum (strain SCRI 1043 / ATCC BAA-672) (Erwinia carotovora subsp. atroseptica).